A 155-amino-acid polypeptide reads, in one-letter code: Small ribosomal subunit protein uS7cz/uS7cy (155 aa).

It belongs to the universal ribosomal protein uS7 family. In terms of assembly, part of the 30S ribosomal subunit.

Its subcellular location is the plastid. It is found in the chloroplast. Its function is as follows. One of the primary rRNA binding proteins, it binds directly to 16S rRNA where it nucleates assembly of the head domain of the 30S subunit. This Populus trichocarpa (Western balsam poplar) protein is Small ribosomal subunit protein uS7cz/uS7cy (rps7-A).